Here is a 138-residue protein sequence, read N- to C-terminus: Cysteine desulfuration protein SufE (138 aa).

The Cysteine persulfide intermediate role is filled by C51.

The protein belongs to the SufE family. In terms of assembly, homodimer. Interacts with SufS.

It is found in the cytoplasm. It participates in cofactor biosynthesis; iron-sulfur cluster biosynthesis. Participates in cysteine desulfuration mediated by SufS. Cysteine desulfuration mobilizes sulfur from L-cysteine to yield L-alanine and constitutes an essential step in sulfur metabolism for biosynthesis of a variety of sulfur-containing biomolecules. Functions as a sulfur acceptor for SufS, by mediating the direct transfer of the sulfur atom from the S-sulfanylcysteine of SufS, an intermediate product of cysteine desulfuration process. The protein is Cysteine desulfuration protein SufE of Pectobacterium carotovorum subsp. carotovorum (strain PC1).